Consider the following 167-residue polypeptide: uncharacterized protein (167 aa).

The 159-residue stretch at 9-167 (PVMRRLTLQD…DCEVRMLREL (159 aa)) folds into the N-acetyltransferase domain.

It belongs to the acetyltransferase family.

This is an uncharacterized protein from Escherichia coli (strain K12).